The sequence spans 151 residues: Large ribosomal subunit protein uL22 (151 aa).

Belongs to the universal ribosomal protein uL22 family. Part of the 50S ribosomal subunit.

Functionally, this protein binds specifically to 23S rRNA. It makes multiple contacts with different domains of the 23S rRNA in the assembled 50S subunit and ribosome. The globular domain of the protein is located near the polypeptide exit tunnel on the outside of the subunit, while an extended beta-hairpin is found that lines the wall of the exit tunnel in the center of the 70S ribosome. In Thermoplasma acidophilum (strain ATCC 25905 / DSM 1728 / JCM 9062 / NBRC 15155 / AMRC-C165), this protein is Large ribosomal subunit protein uL22.